A 612-amino-acid polypeptide reads, in one-letter code: Dihydroxy-acid dehydratase (612 aa).

D81 is a binding site for Mg(2+). Residue C122 coordinates [2Fe-2S] cluster. Positions 123 and 124 each coordinate Mg(2+). K124 bears the N6-carboxylysine mark. A [2Fe-2S] cluster-binding site is contributed by C195. E491 serves as a coordination point for Mg(2+). Catalysis depends on S517, which acts as the Proton acceptor.

It belongs to the IlvD/Edd family. In terms of assembly, homodimer. It depends on [2Fe-2S] cluster as a cofactor. Requires Mg(2+) as cofactor.

It catalyses the reaction (2R)-2,3-dihydroxy-3-methylbutanoate = 3-methyl-2-oxobutanoate + H2O. The catalysed reaction is (2R,3R)-2,3-dihydroxy-3-methylpentanoate = (S)-3-methyl-2-oxopentanoate + H2O. The protein operates within amino-acid biosynthesis; L-isoleucine biosynthesis; L-isoleucine from 2-oxobutanoate: step 3/4. It functions in the pathway amino-acid biosynthesis; L-valine biosynthesis; L-valine from pyruvate: step 3/4. Its function is as follows. Functions in the biosynthesis of branched-chain amino acids. Catalyzes the dehydration of (2R,3R)-2,3-dihydroxy-3-methylpentanoate (2,3-dihydroxy-3-methylvalerate) into 2-oxo-3-methylpentanoate (2-oxo-3-methylvalerate) and of (2R)-2,3-dihydroxy-3-methylbutanoate (2,3-dihydroxyisovalerate) into 2-oxo-3-methylbutanoate (2-oxoisovalerate), the penultimate precursor to L-isoleucine and L-valine, respectively. The polypeptide is Dihydroxy-acid dehydratase (Bartonella tribocorum (strain CIP 105476 / IBS 506)).